The sequence spans 628 residues: Phosphomethylpyrimidine synthase (628 aa).

Substrate contacts are provided by residues asparagine 228, methionine 257, tyrosine 286, histidine 322, 342 to 344, 383 to 386, and glutamate 422; these read SRG and DGLR. Histidine 426 contributes to the Zn(2+) binding site. Residue tyrosine 449 participates in substrate binding. Histidine 490 contributes to the Zn(2+) binding site. Cysteine 570, cysteine 573, and cysteine 578 together coordinate [4Fe-4S] cluster.

It belongs to the ThiC family. In terms of assembly, homodimer. The cofactor is [4Fe-4S] cluster.

The catalysed reaction is 5-amino-1-(5-phospho-beta-D-ribosyl)imidazole + S-adenosyl-L-methionine = 4-amino-2-methyl-5-(phosphooxymethyl)pyrimidine + CO + 5'-deoxyadenosine + formate + L-methionine + 3 H(+). The protein operates within cofactor biosynthesis; thiamine diphosphate biosynthesis. Its function is as follows. Catalyzes the synthesis of the hydroxymethylpyrimidine phosphate (HMP-P) moiety of thiamine from aminoimidazole ribotide (AIR) in a radical S-adenosyl-L-methionine (SAM)-dependent reaction. The chain is Phosphomethylpyrimidine synthase from Methylibium petroleiphilum (strain ATCC BAA-1232 / LMG 22953 / PM1).